Consider the following 83-residue polypeptide: RNA-binding protein Hfq (83 aa).

Positions Asp-9 to Ile-69 constitute a Sm domain.

This sequence belongs to the Hfq family. Homohexamer.

RNA chaperone that binds small regulatory RNA (sRNAs) and mRNAs to facilitate mRNA translational regulation in response to envelope stress, environmental stress and changes in metabolite concentrations. Also binds with high specificity to tRNAs. The sequence is that of RNA-binding protein Hfq from Leptospira biflexa serovar Patoc (strain Patoc 1 / Ames).